Reading from the N-terminus, the 294-residue chain is Factor associated with metabolism and energy (294 aa).

Residues 1–12 (MGLGHSKAHPRV) are compositionally biased toward basic residues. Disordered stretches follow at residues 1–28 (MGLG…TPST) and 255–279 (FWDS…LVRT). Residue Gly-2 is the site of N-myristoyl glycine attachment. Over residues 17 to 28 (PLQSQETETPST) the composition is skewed to polar residues. Positions 268-279 (KDERRPQALVRT) are enriched in basic and acidic residues.

Expressed in proximal tubules of the kidney.

The protein resides in the cell membrane. The protein localises to the cytoplasmic vesicle. Functionally, may be involved in tuning the metabolism, energy expenditure, and excretion processes. In Mus musculus (Mouse), this protein is Factor associated with metabolism and energy.